A 69-amino-acid chain; its full sequence is Putative membrane protein insertion efficiency factor (69 aa).

The protein belongs to the UPF0161 family.

The protein localises to the cell inner membrane. In terms of biological role, could be involved in insertion of integral membrane proteins into the membrane. The sequence is that of Putative membrane protein insertion efficiency factor from Nitrosomonas eutropha (strain DSM 101675 / C91 / Nm57).